We begin with the raw amino-acid sequence, 483 residues long: Arginine/agmatine antiporter (483 aa).

The next 12 helical transmembrane spans lie at 11 to 31 (ILGT…GGIF), 41 to 61 (ASAG…FFIA), 85 to 105 (GFGP…QIFG), 124 to 144 (YFAG…IWIF), 157 to 177 (FVNI…ILIT), 208 to 228 (STML…VISG), 239 to 259 (ATIL…LLPF), 289 to 309 (VLMN…WTIL), 336 to 356 (PSFS…LVYF), 364 to 384 (MLEI…LFLV), 415 to 435 (LWLI…LLAL), and 458 to 478 (EILK…LFSA).

Belongs to the amino acid-polyamine-organocation (APC) superfamily. Basic amino acid/polyamine antiporter (APA) (TC 2.A.3.2) family.

The protein resides in the cell inner membrane. Functionally, catalyzes the exchange of L-arginine for agmatine. The arginine uptake by the bacterium in the macrophage may be a virulence factor against the host innate immune response. This chain is Arginine/agmatine antiporter (aaxC), found in Chlamydia trachomatis serovar A (strain ATCC VR-571B / DSM 19440 / HAR-13).